A 288-amino-acid chain; its full sequence is Male determiner protein Nix (288 aa).

RRM domains are found at residues 19 to 94 (YCIY…LPLS), 108 to 179 (IVVY…KVER), and 205 to 282 (RSIG…FVPE).

Functionally, male determiner protein (M-factor) that controls male somatic sexual differentiation. Acts as a dominant factor that regulates the mRNA splicing of doublesex (dsx) or fruitless (fru) transcripts and promotes expression of male splice forms of dsx and fru. This chain is Male determiner protein Nix, found in Aedes aegypti (Yellowfever mosquito).